The sequence spans 80 residues: MENIKMEMIYFAAAIMLGMAAVGAAIGISLLGGKFLEGAARQPDLMPILRTNFFIVMGLVDAIPMIVVGMALYLIFGVAA.

2 helical membrane passes run 8–28 (MIYF…AIGI) and 55–75 (IVMG…LYLI).

It belongs to the ATPase C chain family. In terms of assembly, F-type ATPases have 2 components, F(1) - the catalytic core - and F(0) - the membrane proton channel. F(1) has five subunits: alpha(3), beta(3), gamma(1), delta(1), epsilon(1). F(0) has three main subunits: a(1), b(2) and c(10-14). The alpha and beta chains form an alternating ring which encloses part of the gamma chain. F(1) is attached to F(0) by a central stalk formed by the gamma and epsilon chains, while a peripheral stalk is formed by the delta and b chains.

The protein localises to the cell inner membrane. In terms of biological role, f(1)F(0) ATP synthase produces ATP from ADP in the presence of a proton or sodium gradient. F-type ATPases consist of two structural domains, F(1) containing the extramembraneous catalytic core and F(0) containing the membrane proton channel, linked together by a central stalk and a peripheral stalk. During catalysis, ATP synthesis in the catalytic domain of F(1) is coupled via a rotary mechanism of the central stalk subunits to proton translocation. Key component of the F(0) channel; it plays a direct role in translocation across the membrane. A homomeric c-ring of between 10-14 subunits forms the central stalk rotor element with the F(1) delta and epsilon subunits. The sequence is that of ATP synthase subunit c from Aeromonas salmonicida (strain A449).